The primary structure comprises 66 residues: M-poneratoxin-Dq3a (66 aa).

Residues 1-23 (MKLSALSIIFGMILVMTIMYTKA) form the signal peptide. A propeptide spanning residues 24 to 43 (EAEAEAEADADADAKAEAEA) is cleaved from the precursor.

This sequence belongs to the non-disulfide-bridged peptide (NDBP) superfamily. Medium-length antimicrobial peptide (group 3) family. Ponericin-W subfamily. Expressed by the venom gland.

The protein localises to the secreted. Its subcellular location is the target cell membrane. In terms of biological role, may have antimicrobial properties by disrupting the integrity of the bacterial cell membrane. In addition, when tested in vitro on the parasite Trypanosoma cruzi (responsible of the Chagas disease), is able to potently reduce the number of the three forms (epimastigote, trypomastigote and amastigote) by inducing cell death through necrosis. May have antimicrobial properties by disrupting the integrity of the bacterial cell membrane. In addition, when tested in vitro on the parasite Trypanosoma cruzi (responsible of the Chagas disease), is able to moderately reduce the number of the forms epimastigote and trypomastigote. Its activity on the amastigote form has not been tested. Functionally, may have antimicrobial properties by disrupting the integrity of the bacterial cell membrane. In addition, when tested in vitro on the parasite Trypanosoma cruzi (responsible of the Chagas disease), shows only a weak reduction of the number of the trypomastigote forms. Has no activity on the epimastigote forms. Its activity on the amastigote form has not been tested. The polypeptide is M-poneratoxin-Dq3a (Dinoponera quadriceps (South American ant)).